Consider the following 190-residue polypeptide: Elongation factor P-like protein (190 aa).

The protein belongs to the elongation factor P family.

This chain is Elongation factor P-like protein, found in Psychromonas ingrahamii (strain DSM 17664 / CCUG 51855 / 37).